We begin with the raw amino-acid sequence, 403 residues long: Argininosuccinate synthase (403 aa).

An ATP-binding site is contributed by 10–18 (AYSGGLDTS). Tyrosine 87 is an L-citrulline binding site. Glycine 117 contributes to the ATP binding site. Threonine 119, asparagine 123, and aspartate 124 together coordinate L-aspartate. Asparagine 123 serves as a coordination point for L-citrulline. Residues arginine 127, serine 175, glutamate 260, and tyrosine 272 each contribute to the L-citrulline site.

This sequence belongs to the argininosuccinate synthase family. Type 1 subfamily. In terms of assembly, homotetramer.

It is found in the cytoplasm. The catalysed reaction is L-citrulline + L-aspartate + ATP = 2-(N(omega)-L-arginino)succinate + AMP + diphosphate + H(+). It functions in the pathway amino-acid biosynthesis; L-arginine biosynthesis; L-arginine from L-ornithine and carbamoyl phosphate: step 2/3. This Bacillus velezensis (strain DSM 23117 / BGSC 10A6 / LMG 26770 / FZB42) (Bacillus amyloliquefaciens subsp. plantarum) protein is Argininosuccinate synthase.